A 550-amino-acid chain; its full sequence is Coiled-coil domain-containing protein 60 (550 aa).

The tract at residues 1–21 is disordered; the sequence is MTKVPATKKLQSSPNSGAVRP. A coiled-coil region spans residues 71–98; the sequence is AILREETAKKKKQQQLQKLKEEERNKFQ. Disordered stretches follow at residues 219–293 and 336–367; these read KFKI…EPLY and AYKEMQTTLKSSERSSSTSAESHIQPVQKKSK. The span at 235–256 shows a compositional bias: low complexity; sequence RGSTLSLSRASGGSSPQSSMIS. Over residues 336–345 the composition is skewed to polar residues; sequence AYKEMQTTLK.

This chain is Coiled-coil domain-containing protein 60 (CCDC60), found in Homo sapiens (Human).